Reading from the N-terminus, the 275-residue chain is tRNA pseudouridine synthase A (275 aa).

The Nucleophile role is filled by Asp56. Position 114 (Tyr114) interacts with substrate.

It belongs to the tRNA pseudouridine synthase TruA family. In terms of assembly, homodimer.

It carries out the reaction uridine(38/39/40) in tRNA = pseudouridine(38/39/40) in tRNA. Functionally, formation of pseudouridine at positions 38, 39 and 40 in the anticodon stem and loop of transfer RNAs. This chain is tRNA pseudouridine synthase A, found in Polynucleobacter asymbioticus (strain DSM 18221 / CIP 109841 / QLW-P1DMWA-1) (Polynucleobacter necessarius subsp. asymbioticus).